We begin with the raw amino-acid sequence, 426 residues long: MSSAPKLFRVIGGAQNYDWGKLGSTSAVARFAKLNDPENVSIEEEKPYAELWMGTHPSVPTVSAQDRTPLRDLVRAAPEEMLGQDIIDKFGSKEGIPFLFKVLSIRKVLSIQAHPDKALARQLHASDPKHYPDDNHKPEMAVAITDFEAFCGFKPLAEIDALLQKIPEFRELVGDDVVAEFHSGIDSSDVAGKKKLLQKVFSRVMNSPESKFEPLAARLVERTKSDPQLFGETLADLIQRLDAQFPNDIGLFCGCLLLNHCILKSGEAMFLEAKDPHAYISGDIMECMAASDNVIRAGFTPKFKDVEVLVDCLTYSFNPVEEQKLKPAPFPRGTGVAELKLYDPPIDEFSVLQTTFTSAGAEKFEGLDGPSLLIVTEGKGKIKLQGSDEALDASTGNIFFVAPKAAIELVSESKDTFTSYRAFCEA.

Positions 112, 114, 139, and 277 each coordinate Zn(2+). Residue Arg296 is part of the active site.

Belongs to the mannose-6-phosphate isomerase type 1 family. The cofactor is Zn(2+).

Its subcellular location is the cytoplasm. The catalysed reaction is D-mannose 6-phosphate = D-fructose 6-phosphate. It participates in nucleotide-sugar biosynthesis; GDP-alpha-D-mannose biosynthesis; alpha-D-mannose 1-phosphate from D-fructose 6-phosphate: step 1/2. Its function is as follows. Involved in the synthesis of the GDP-mannose and dolichol-phosphate-mannose required for a number of critical mannosyl transfer reactions. The sequence is that of Mannose-6-phosphate isomerase (PMI40) from Ogataea parapolymorpha (strain ATCC 26012 / BCRC 20466 / JCM 22074 / NRRL Y-7560 / DL-1) (Yeast).